The primary structure comprises 244 residues: 3-oxoacyl-[acyl-carrier-protein] reductase FabG (244 aa).

NADP(+) is bound by residues 9 to 12, 60 to 61, and asparagine 87; these read GASR and NV. Serine 139 lines the substrate pocket. Residue tyrosine 152 is the Proton acceptor of the active site. NADP(+)-binding positions include 152 to 156 and isoleucine 185; that span reads YVATK.

This sequence belongs to the short-chain dehydrogenases/reductases (SDR) family. Homotetramer.

The catalysed reaction is a (3R)-hydroxyacyl-[ACP] + NADP(+) = a 3-oxoacyl-[ACP] + NADPH + H(+). It functions in the pathway lipid metabolism; fatty acid biosynthesis. Functionally, catalyzes the NADPH-dependent reduction of beta-ketoacyl-ACP substrates to beta-hydroxyacyl-ACP products, the first reductive step in the elongation cycle of fatty acid biosynthesis. This is 3-oxoacyl-[acyl-carrier-protein] reductase FabG (fabG) from Staphylococcus epidermidis (strain ATCC 35984 / DSM 28319 / BCRC 17069 / CCUG 31568 / BM 3577 / RP62A).